Consider the following 35-residue polypeptide: U14-ctenitoxin-Pn1a (35 aa).

Cystine bridges form between Cys-3–Cys-17, Cys-10–Cys-22, and Cys-16–Cys-32.

Expressed by the venom gland.

The protein resides in the secreted. Functionally, neurotoxin. In Phoneutria nigriventer (Brazilian armed spider), this protein is U14-ctenitoxin-Pn1a.